Reading from the N-terminus, the 186-residue chain is Ribosome-recycling factor (186 aa).

Belongs to the RRF family.

The protein localises to the cytoplasm. Its function is as follows. Responsible for the release of ribosomes from messenger RNA at the termination of protein biosynthesis. May increase the efficiency of translation by recycling ribosomes from one round of translation to another. In Paracidovorax citrulli (strain AAC00-1) (Acidovorax citrulli), this protein is Ribosome-recycling factor.